A 301-amino-acid chain; its full sequence is Vomeronasal type-1 receptor 4 (301 aa).

Residues 1–5 are Extracellular-facing; the sequence is MASRY. A helical transmembrane segment spans residues 6–26; that stretch reads VAVGMILSQTVVGVLGSFSVL. Residues 27 to 48 lie on the Cytoplasmic side of the membrane; it reads LHYLSFYCTGCRLRSTDLIVKH. A helical membrane pass occupies residues 49 to 69; the sequence is LIVANFLALRCKGVPQTMAAF. Topologically, residues 70-88 are extracellular; that stretch reads GVRYFLNALGCKLVFYLHR. A helical membrane pass occupies residues 89 to 109; that stretch reads VGRGVSIGTTCLLSVFQVITV. Residues 110–126 are Cytoplasmic-facing; that stretch reads SSRKSRWAKLKEKAPKH. A helical transmembrane segment spans residues 127–147; that stretch reads VGFSVLLCWIVCMLVNIIFPM. Residues 148 to 185 lie on the Extracellular side of the membrane; sequence YVTGKWNYTNITVNEDLGYCSGGGNNKIAQTLRAMLLS. Residues N154 and N157 are each glycosylated (N-linked (GlcNAc...) asparagine). A helical transmembrane segment spans residues 186-206; it reads FPDVLCLGLMLWVSSSMVCIL. The Cytoplasmic portion of the chain corresponds to 207–234; sequence HRHKQRVQHIDRSNLSPRASPENRATQS. A helical transmembrane segment spans residues 235-255; sequence ILILVSTFVSSYTLSCLFQVC. At 256-264 the chain is on the extracellular side; sequence MALLDNPNS. The helical transmembrane segment at 265-285 threads the bilayer; sequence LLVNTSALMSVCFPTLSPFVL. The Cytoplasmic portion of the chain corresponds to 286–301; sequence MSCDPSVYRFCFAWKR.

The protein belongs to the G-protein coupled receptor 1 family.

The protein localises to the cell membrane. Functionally, putative pheromone receptor. The chain is Vomeronasal type-1 receptor 4 (VN1R4) from Homo sapiens (Human).